The following is a 260-amino-acid chain: MIVKTRAVVLRDIKYRDQSKICLLLTREYGQVSVILKGGRSAKSKTGMLFSPGNLIDAVLYKKGNRDLQLASDASLVKSPLSETPDLERFSVLYRVLDLVRYASGPEEKNVPLFTLVAATIERLCDTERDFQPILAGFLLRLVSVLGFTPALKRCVFSNYDLLGSIEEMQLDELLFVHDPGGFALPGSAVPMGATIQRVPVSHYLFIRALAATGSQAACPEASPEEVSAVTALLQEYCACHLGRMPHRKHLDIVSRLISA.

Belongs to the RecO family.

In terms of biological role, involved in DNA repair and RecF pathway recombination. The chain is DNA repair protein RecO from Chlorobaculum parvum (strain DSM 263 / NCIMB 8327) (Chlorobium vibrioforme subsp. thiosulfatophilum).